We begin with the raw amino-acid sequence, 200 residues long: Probable GTP-binding protein EngB (200 aa).

The EngB-type G domain maps to 25–199 (SGYEVAFAGR…ISVLDRWYEW (175 aa)). GTP is bound by residues 33–40 (GRSNAGKS), 60–64 (GRTQL), 78–81 (DLPG), 145–148 (TKAD), and 178–180 (FSS). Residues Ser40 and Thr62 each contribute to the Mg(2+) site.

This sequence belongs to the TRAFAC class TrmE-Era-EngA-EngB-Septin-like GTPase superfamily. EngB GTPase family. Mg(2+) is required as a cofactor.

In terms of biological role, necessary for normal cell division and for the maintenance of normal septation. The sequence is that of Probable GTP-binding protein EngB from Legionella pneumophila (strain Paris).